The primary structure comprises 296 residues: NAD kinase (296 aa).

D72 serves as the catalytic Proton acceptor. Residues D72 to G73, N146 to D147, R157, K174, D176, T187 to S192, and Q247 contribute to the NAD(+) site.

This sequence belongs to the NAD kinase family. It depends on a divalent metal cation as a cofactor.

It localises to the cytoplasm. It carries out the reaction NAD(+) + ATP = ADP + NADP(+) + H(+). Involved in the regulation of the intracellular balance of NAD and NADP, and is a key enzyme in the biosynthesis of NADP. Catalyzes specifically the phosphorylation on 2'-hydroxyl of the adenosine moiety of NAD to yield NADP. The chain is NAD kinase from Pseudomonas fluorescens (strain Pf0-1).